The chain runs to 400 residues: Bifunctional enzyme IspD/IspF (400 aa).

The segment at 1-240 is 2-C-methyl-D-erythritol 4-phosphate cytidylyltransferase; the sequence is MQESTMKFGI…EKLSHALPDV (240 aa). The 2-C-methyl-D-erythritol 2,4-cyclodiphosphate synthase stretch occupies residues 241-400; the sequence is RTGNGYDVHQ…ATVVYQGRPL (160 aa). A divalent metal cation is bound by residues Asp-247 and His-249. 4-CDP-2-C-methyl-D-erythritol 2-phosphate-binding positions include 247–249 and 273–274; these read DVH and HS. Position 281 (His-281) interacts with a divalent metal cation. Residues 295–297, 371–374, Phe-378, and Arg-381 each bind 4-CDP-2-C-methyl-D-erythritol 2-phosphate; these read DIG and TTNE.

This sequence in the N-terminal section; belongs to the IspD/TarI cytidylyltransferase family. IspD subfamily. The protein in the C-terminal section; belongs to the IspF family. A divalent metal cation is required as a cofactor.

The enzyme catalyses 2-C-methyl-D-erythritol 4-phosphate + CTP + H(+) = 4-CDP-2-C-methyl-D-erythritol + diphosphate. It catalyses the reaction 4-CDP-2-C-methyl-D-erythritol 2-phosphate = 2-C-methyl-D-erythritol 2,4-cyclic diphosphate + CMP. It functions in the pathway isoprenoid biosynthesis; isopentenyl diphosphate biosynthesis via DXP pathway; isopentenyl diphosphate from 1-deoxy-D-xylulose 5-phosphate: step 2/6. The protein operates within isoprenoid biosynthesis; isopentenyl diphosphate biosynthesis via DXP pathway; isopentenyl diphosphate from 1-deoxy-D-xylulose 5-phosphate: step 4/6. Its function is as follows. Bifunctional enzyme that catalyzes the formation of 4-diphosphocytidyl-2-C-methyl-D-erythritol from CTP and 2-C-methyl-D-erythritol 4-phosphate (MEP) (IspD), and catalyzes the conversion of 4-diphosphocytidyl-2-C-methyl-D-erythritol 2-phosphate (CDP-ME2P) to 2-C-methyl-D-erythritol 2,4-cyclodiphosphate (ME-CPP) with a corresponding release of cytidine 5-monophosphate (CMP) (IspF). The polypeptide is Bifunctional enzyme IspD/IspF (Agrobacterium fabrum (strain C58 / ATCC 33970) (Agrobacterium tumefaciens (strain C58))).